The primary structure comprises 347 residues: Gas vesicle ATPase GvpN (347 aa).

The tract at residues methionine 1–threonine 50 is disordered. Residues serine 18 to glutamine 42 are compositionally biased toward basic and acidic residues. Glycine 91 to threonine 98 lines the ATP pocket.

It belongs to the CbbQ/NirQ/NorQ/GpvN family. Forms homodimers, a GvpN-GvpO heterodimer, interacts with GvpC and GvpL, might interact with GvpA.

It localises to the gas vesicle. The protein resides in the cytoplasm. It carries out the reaction ATP + H2O = ADP + phosphate + H(+). Its function is as follows. An ATPase that functions in gas vesicle formation. A minor component of the gas vesicle, also found in soluble extracts. Gas vesicles are hollow, gas filled proteinaceous nanostructures found in some microorganisms. They allow positioning of halobacteria at the optimal depth for growth in the poorly aerated, shallow brine pools of their habitat. Functionally, expression of a 9.5 kb mc-vac DNA fragment containing 2 divergently transcribed regions (gvpD-gvpE-gvpF-gvpG-gvpH-gvpI-gvpJ-gvpK-gvpL-gvpM and gvpA-gvpC-gvpN-gvpO) allows H.volcanii to produce gas vesicles. The polypeptide is Gas vesicle ATPase GvpN (Haloferax mediterranei (strain ATCC 33500 / DSM 1411 / JCM 8866 / NBRC 14739 / NCIMB 2177 / R-4) (Halobacterium mediterranei)).